The sequence spans 864 residues: Alanine--tRNA ligase (864 aa).

Residues His-553, His-557, Cys-655, and His-659 each contribute to the Zn(2+) site. Positions 828 to 847 (VGGKGGGRPDMAQAGGKDPS) are disordered.

The protein belongs to the class-II aminoacyl-tRNA synthetase family. Zn(2+) serves as cofactor.

It is found in the cytoplasm. The catalysed reaction is tRNA(Ala) + L-alanine + ATP = L-alanyl-tRNA(Ala) + AMP + diphosphate. In terms of biological role, catalyzes the attachment of alanine to tRNA(Ala) in a two-step reaction: alanine is first activated by ATP to form Ala-AMP and then transferred to the acceptor end of tRNA(Ala). Also edits incorrectly charged Ser-tRNA(Ala) and Gly-tRNA(Ala) via its editing domain. This Hydrogenovibrio crunogenus (strain DSM 25203 / XCL-2) (Thiomicrospira crunogena) protein is Alanine--tRNA ligase.